Consider the following 2201-residue polypeptide: Genome polyprotein (2201 aa).

G2 carries the N-myristoyl glycine; by host lipid modification. Over 2–1511 (GAQVSTQKTG…YVSRAFICLQ (1510 aa)) the chain is Cytoplasmic. The interval 566–582 (KLQGDVEEAIERARCTV) is amphipathic alpha-helix. A Cell attachment site motif is present at residues 858-860 (RGD). Active-site for protease 2A activity residues include H888 and D906. Positions 923 and 925 each coordinate Zn(2+). C977 (for protease 2A activity) is an active-site residue. 2 residues coordinate Zn(2+): C983 and H985. Residues 1117–1189 (NDSWLKKFTE…EQSAPSQSDQ (73 aa)) form a membrane-binding region. An oligomerization region spans residues 1117-1255 (NDSWLKKFTE…SPGAGKSVAT (139 aa)). The interval 1138-1142 (AIKIQ) is RNA-binding. Residues 1221-1377 (EKKMSNYIQF…SMYSQNGKIN (157 aa)) form the SF3 helicase domain. Residues C1385, C1397, and C1402 each contribute to the Zn(2+) site. A C4-type; degenerate zinc finger spans residues 1385-1402 (CDEECCPVNFKKCCPLVC). The interval 1429–1436 (EYNHRHSV) is RNA-binding. The tract at residues 1440 to 1445 (LEALFQ) is oligomerization. An intramembrane segment occupies 1512–1527 (AITTFVSVAGIIYIIY). Residues 1528–2201 (KLFAGFQGAY…TLRRKWLDSF (674 aa)) are Cytoplasmic-facing. Residue Y1537 is modified to O-(5'-phospho-RNA)-tyrosine. Positions 1557–1735 (GPAFEFAVAM…FSAALLKHYF (179 aa)) constitute a Peptidase C3 domain. Residues H1596, E1627, and C1703 each act as for protease 3C activity in the active site. One can recognise a RdRp catalytic domain in the interval 1966–2082 (GHLIAFDYSG…SYPWPIDASL (117 aa)). Residues D1972 and D2068 each contribute to the Mg(2+) site.

Belongs to the picornaviruses polyprotein family. Interacts with capsid protein VP1 and capsid protein VP3 to form heterotrimeric protomers. In terms of assembly, interacts with capsid protein VP0, and capsid protein VP3 to form heterotrimeric protomers. Five protomers subsequently associate to form pentamers which serve as building blocks for the capsid. Interacts with capsid protein VP2, capsid protein VP3 and capsid protein VP4 following cleavage of capsid protein VP0. Interacts with host integrin heterodimer ITGAV/ITGB6. As to quaternary structure, interacts with capsid protein VP1 and capsid protein VP3 in the mature capsid. Interacts with capsid protein VP0 and capsid protein VP1 to form heterotrimeric protomers. Five protomers subsequently associate to form pentamers which serve as building blocks for the capsid. Interacts with capsid protein VP4 in the mature capsid. Interacts with protein 2C; this interaction may be important for virion morphogenesis. In terms of assembly, interacts with capsid protein VP1 and capsid protein VP3. As to quaternary structure, homodimer. Homohexamer; forms a hexameric ring structure with 6-fold symmetry characteristic of AAA+ ATPases. Interacts (via N-terminus) with host RTN3 (via reticulon domain); this interaction is important for viral replication. Interacts with capsid protein VP3; this interaction may be important for virion morphogenesis. In terms of assembly, interacts with protein 3CD. As to quaternary structure, homodimer. Interacts with host GBF1. Interacts (via GOLD domain) with host ACBD3 (via GOLD domain); this interaction allows the formation of a viral protein 3A/ACBD3 heterotetramer with a 2:2 stoichiometry, which will stimulate the recruitment of host PI4KB in order to synthesize PI4P at the viral RNA replication sites. Interacts with RNA-directed RNA polymerase. In terms of assembly, interacts with protein 3AB and with RNA-directed RNA polymerase. As to quaternary structure, interacts with Viral protein genome-linked and with protein 3CD. Mg(2+) is required as a cofactor. Specific enzymatic cleavages in vivo by the viral proteases yield processing intermediates and the mature proteins. Post-translationally, myristoylation is required for the formation of pentamers during virus assembly. Further assembly of 12 pentamers and a molecule of genomic RNA generates the provirion. In terms of processing, during virion maturation, immature virions are rendered infectious following cleavage of VP0 into VP4 and VP2. This maturation seems to be an autocatalytic event triggered by the presence of RNA in the capsid and it is followed by a conformational change infectious virion. Myristoylation is required during RNA encapsidation and formation of the mature virus particle. Post-translationally, VPg is uridylylated by the polymerase into VPg-pUpU. This acts as a nucleotide-peptide primer for the genomic RNA replication.

The protein localises to the virion. Its subcellular location is the host cytoplasm. It localises to the host cytoplasmic vesicle membrane. The protein resides in the host nucleus. The catalysed reaction is a ribonucleoside 5'-triphosphate + H2O = a ribonucleoside 5'-diphosphate + phosphate + H(+). It carries out the reaction Selective cleavage of Tyr-|-Gly bond in the picornavirus polyprotein.. It catalyses the reaction RNA(n) + a ribonucleoside 5'-triphosphate = RNA(n+1) + diphosphate. The enzyme catalyses Selective cleavage of Gln-|-Gly bond in the poliovirus polyprotein. In other picornavirus reactions Glu may be substituted for Gln, and Ser or Thr for Gly.. Its activity is regulated as follows. Replication or transcription is subject to high level of random mutations by the nucleotide analog ribavirin. Functionally, forms an icosahedral capsid of pseudo T=3 symmetry with capsid proteins VP2 and VP3. The capsid is 300 Angstroms in diameter, composed of 60 copies of each capsid protein and enclosing the viral positive strand RNA genome. Capsid protein VP1 mainly forms the vertices of the capsid. Capsid protein VP1 interacts with host integrin ITGAV/ITGB6 to provide virion attachment to target host cells. This attachment induces virion internalization. Tyrosine kinases are probably involved in the entry process. After binding to its receptor, the capsid undergoes conformational changes. Capsid protein VP1 N-terminus (that contains an amphipathic alpha-helix) and capsid protein VP4 are externalized. Together, they shape a pore in the host membrane through which viral genome is translocated to host cell cytoplasm. In terms of biological role, forms an icosahedral capsid of pseudo T=3 symmetry with capsid proteins VP2 and VP3. The capsid is 300 Angstroms in diameter, composed of 60 copies of each capsid protein and enclosing the viral positive strand RNA genome. Lies on the inner surface of the capsid shell. After binding to the host receptor, the capsid undergoes conformational changes. Capsid protein VP4 is released, Capsid protein VP1 N-terminus is externalized, and together, they shape a pore in the host membrane through which the viral genome is translocated into the host cell cytoplasm. Its function is as follows. Component of immature procapsids, which is cleaved into capsid proteins VP4 and VP2 after maturation. Allows the capsid to remain inactive before the maturation step. Functionally, cysteine protease that cleaves viral polyprotein and specific host proteins. It is responsible for the autocatalytic cleavage between the P1 and P2 regions, which is the first cleavage occurring in the polyprotein. Also cleaves the host translation initiation factor EIF4G1, in order to shut down the capped cellular mRNA translation. Inhibits the host nucleus-cytoplasm protein and RNA trafficking by cleaving host members of the nuclear pores. Counteracts stress granule formation probably by antagonizing its assembly or promoting its dissassembly. Cleaves and inhibits host IFIH1/MDA5, thereby inhibiting the type-I IFN production and the establishment of the antiviral state. Cleaves and inhibits host MAVS, thereby inhibiting the type-I IFN production and the establishment of the antiviral state. In terms of biological role, plays an essential role in the virus replication cycle by acting as a viroporin. Creates a pore in the host endoplasmic reticulum and as a consequence releases Ca2+ in the cytoplasm of infected cell. In turn, high levels of cytoplasmic calcium may trigger membrane trafficking and transport of viral ER-associated proteins to viroplasms, sites of viral genome replication. Induces and associates with structural rearrangements of intracellular membranes. Displays RNA-binding, nucleotide binding and NTPase activities. May play a role in virion morphogenesis and viral RNA encapsidation by interacting with the capsid protein VP3. Its function is as follows. Localizes the viral replication complex to the surface of membranous vesicles. Together with protein 3CD binds the Cis-Active RNA Element (CRE) which is involved in RNA synthesis initiation. Acts as a cofactor to stimulate the activity of 3D polymerase, maybe through a nucleid acid chaperone activity. Functionally, localizes the viral replication complex to the surface of membranous vesicles. It inhibits host cell endoplasmic reticulum-to-Golgi apparatus transport and causes the disassembly of the Golgi complex, possibly through GBF1 interaction. This would result in depletion of MHC, trail receptors and IFN receptors at the host cell surface. Plays an essential role in viral RNA replication by recruiting ACBD3 and PI4KB at the viral replication sites, thereby allowing the formation of the rearranged membranous structures where viral replication takes place. In terms of biological role, acts as a primer for viral RNA replication and remains covalently bound to viral genomic RNA. VPg is uridylylated prior to priming replication into VPg-pUpU. The oriI viral genomic sequence may act as a template for this. The VPg-pUpU is then used as primer on the genomic RNA poly(A) by the RNA-dependent RNA polymerase to replicate the viral genome. During genome replication, the VPg-RNA linkage is removed by the host TDP2, thereby accelerating replication. During the late stage of the replication cycle, host TDP2 is excluded from sites of viral RNA synthesis and encapsidation, allowing for the generation of progeny virions. Involved in the viral replication complex and viral polypeptide maturation. It exhibits protease activity with a specificity and catalytic efficiency that is different from protease 3C. Protein 3CD lacks polymerase activity. Protein 3CD binds to the 5'UTR of the viral genome. Its function is as follows. Replicates the viral genomic RNA on the surface of intracellular membranes. May form linear arrays of subunits that propagate along a strong head-to-tail interaction called interface-I. Covalently attaches UMP to a tyrosine of VPg, which is used to prime RNA synthesis. The positive stranded RNA genome is first replicated at virus induced membranous vesicles, creating a dsRNA genomic replication form. This dsRNA is then used as template to synthesize positive stranded RNA genomes. ss(+)RNA genomes are either translated, replicated or encapsidated. Functionally, major viral protease that mediates proteolytic processing of the polyprotein. Cleaves host EIF5B, contributing to host translation shutoff. Also cleaves host PABPC1, contributing to host translation shutoff. Cleaves host NLRP1, triggers host N-glycine-mediated degradation of the autoinhibitory NLRP1 N-terminal fragment. The chain is Genome polyprotein from Coxsackievirus A9 (strain Griggs).